The sequence spans 483 residues: Protein nucleotidyltransferase YdiU (483 aa).

Residues Gly87, Gly89, Arg90, Lys110, Asp122, Gly123, Arg173, and Arg180 each contribute to the ATP site. The active-site Proton acceptor is the Asp249. Asn250 and Asp259 together coordinate Mg(2+). Asp259 contributes to the ATP binding site.

Belongs to the SELO family. Requires Mg(2+) as cofactor. Mn(2+) serves as cofactor.

The catalysed reaction is L-seryl-[protein] + ATP = 3-O-(5'-adenylyl)-L-seryl-[protein] + diphosphate. The enzyme catalyses L-threonyl-[protein] + ATP = 3-O-(5'-adenylyl)-L-threonyl-[protein] + diphosphate. It carries out the reaction L-tyrosyl-[protein] + ATP = O-(5'-adenylyl)-L-tyrosyl-[protein] + diphosphate. It catalyses the reaction L-histidyl-[protein] + UTP = N(tele)-(5'-uridylyl)-L-histidyl-[protein] + diphosphate. The catalysed reaction is L-seryl-[protein] + UTP = O-(5'-uridylyl)-L-seryl-[protein] + diphosphate. The enzyme catalyses L-tyrosyl-[protein] + UTP = O-(5'-uridylyl)-L-tyrosyl-[protein] + diphosphate. Its function is as follows. Nucleotidyltransferase involved in the post-translational modification of proteins. It can catalyze the addition of adenosine monophosphate (AMP) or uridine monophosphate (UMP) to a protein, resulting in modifications known as AMPylation and UMPylation. This is Protein nucleotidyltransferase YdiU from Pelagibacter ubique (strain HTCC1062).